A 150-amino-acid chain; its full sequence is Putative pre-16S rRNA nuclease (150 aa).

The protein belongs to the YqgF nuclease family.

Its subcellular location is the cytoplasm. Could be a nuclease involved in processing of the 5'-end of pre-16S rRNA. This chain is Putative pre-16S rRNA nuclease, found in Syntrophus aciditrophicus (strain SB).